The chain runs to 295 residues: Glutamate 5-kinase (295 aa).

Residue lysine 9 coordinates ATP. Substrate-binding residues include serine 49, aspartate 136, and asparagine 148. ATP contacts are provided by residues 168–169 (TD) and 210–216 (TGGMLTK).

It belongs to the glutamate 5-kinase family.

The protein resides in the cytoplasm. The enzyme catalyses L-glutamate + ATP = L-glutamyl 5-phosphate + ADP. It functions in the pathway amino-acid biosynthesis; L-proline biosynthesis; L-glutamate 5-semialdehyde from L-glutamate: step 1/2. In terms of biological role, catalyzes the transfer of a phosphate group to glutamate to form L-glutamate 5-phosphate. The sequence is that of Glutamate 5-kinase from Neisseria gonorrhoeae (strain NCCP11945).